The sequence spans 1112 residues: Zinc finger protein 654 (1112 aa).

The interval 482 to 514 (PSSSLKKRVDQQSVEEDQSTGETDPDDASVVQP) is disordered. The segment covering 494 to 508 (SVEEDQSTGETDPDD) has biased composition (acidic residues). 5 consecutive C2H2-type zinc fingers follow at residues 566 to 588 (FACV…LKNH), 738 to 763 (FKCP…RTVH), 779 to 801 (GKCK…LNRH), 807 to 831 (YFCL…TKSH), and 836 to 860 (AQCS…EAQH). Disordered regions lie at residues 885–906 (FSNE…KYST) and 997–1018 (VESQ…NLTS). 2 stretches are compositionally biased toward polar residues: residues 886–899 (SNEN…VSTS) and 1002–1018 (HSAL…NLTS). Residues Ser-1107 and Ser-1111 each carry the phosphoserine modification.

This sequence belongs to the krueppel C2H2-type zinc-finger protein family.

It localises to the nucleus. In terms of biological role, may be involved in transcriptional regulation. This Mus musculus (Mouse) protein is Zinc finger protein 654.